Here is a 199-residue protein sequence, read N- to C-terminus: Nucleoside triphosphate pyrophosphatase (199 aa).

The active-site Proton acceptor is the D76.

This sequence belongs to the Maf family. A divalent metal cation serves as cofactor.

Its subcellular location is the cytoplasm. It carries out the reaction a ribonucleoside 5'-triphosphate + H2O = a ribonucleoside 5'-phosphate + diphosphate + H(+). It catalyses the reaction a 2'-deoxyribonucleoside 5'-triphosphate + H2O = a 2'-deoxyribonucleoside 5'-phosphate + diphosphate + H(+). Nucleoside triphosphate pyrophosphatase. May have a dual role in cell division arrest and in preventing the incorporation of modified nucleotides into cellular nucleic acids. The sequence is that of Nucleoside triphosphate pyrophosphatase from Ruegeria sp. (strain TM1040) (Silicibacter sp.).